The following is a 528-amino-acid chain: Pentatricopeptide repeat-containing protein At1g62914, mitochondrial (528 aa).

A mitochondrion-targeting transit peptide spans 1–20 (MLAKISSSAKRFVHRSLVVR). 13 PPR repeats span residues 77-111 (SIIEFSKLLSAIAKMNKFDLVISFGEKMEILGISH), 112-146 (NLYTYNILINCFCRCSRLSLALALLGKMMKLGYEP), 147-181 (DIVTLNSLLNGFCHGNRISDAVALVDQMVEMGYKP), 182-216 (DTVTFTTLIHGLFLHNKASEAVALIDRMVQRGCQP), 217-251 (DLVTYGAVVNGLCKRGDTDLALNLLNKMEAAKIEA), 252-286 (NVVIYSTVIDSLCKYRHEDDALNLFTEMENKGVRP), 287-321 (NVITYSSLISCLCNYGRWSDASRLLSDMIERKINP), 322-356 (NLVTFSALIDAFVKKGKLVKAEKLYEEMIKRSIDP), 357-391 (NIFTYSSLINGFCMLDRLGEAKQMLELMIRKDCLP), 392-426 (NVVTYNTLINGFCKAKRVDKGMELFREMSQRGLVG), 427-461 (NTVTYTTLIHGFFQARDCDNAQMVFKQMVSVGVHP), 462-496 (NILTYNILLDGLCKNGKLAKAMVVFEYLQRSTMEP), and 497-528 (DIYTYNIMIEGMCKAGKWKMGGIYFVASALKE).

It belongs to the PPR family. P subfamily.

The protein resides in the mitochondrion. In Arabidopsis thaliana (Mouse-ear cress), this protein is Pentatricopeptide repeat-containing protein At1g62914, mitochondrial.